The primary structure comprises 628 residues: Patulin synthase (628 aa).

Residues 1 to 20 (MRPIPSILGALGAFATLSAA) form the signal peptide. Asn-48 carries N-linked (GlcNAc...) asparagine glycosylation. FAD-binding positions include 60 to 61 (TA) and 81 to 82 (EA). Asn-92 carries an N-linked (GlcNAc...) asparagine glycan. 147 to 150 (NYMA) contributes to the FAD binding site. 5 N-linked (GlcNAc...) asparagine glycosylation sites follow: Asn-197, Asn-260, Asn-386, Asn-429, and Asn-486. His-564 acts as the Proton acceptor in catalysis. FAD is bound by residues Ala-598 and 609–610 (PQ).

This sequence belongs to the GMC oxidoreductase family. As to quaternary structure, homodimer. The cofactor is FAD.

Its subcellular location is the cytoplasm. It localises to the cell cortex. The protein localises to the vacuole. The protein resides in the secreted. It is found in the cell wall. The enzyme catalyses (E)-ascladiol + A = patulin + AH2. Its pathway is mycotoxin biosynthesis; patulin biosynthesis. Functionally, patulin synthase; part of the gene cluster that mediates the biosynthesis of patulin, an acetate-derived tetraketide mycotoxin produced by several fungal species that shows antimicrobial properties against several bacteria. PatE catalyzes the last step of the pathway which is the conversion of E-ascladiol to patulin. The pathway begins with the synthesis of 6-methylsalicylic acid by the polyketide synthase (PKS) patK via condensation of acetate and malonate units. The 6-methylsalicylic acid decarboxylase patG then catalyzes the decarboxylation of 6-methylsalicylic acid to yield m-cresol (also known as 3-methylphenol). These first reactions occur in the cytosol. The intermediate m-cresol is then transported into the endoplasmic reticulum where the cytochrome P450 monooxygenase patH converts it to m-hydroxybenzyl alcohol, which is further converted to gentisyl alcohol by the cytochrome P450 monooxygenase patI. The oxidoreductases patJ and patO further convert gentisyl alcohol to isoepoxydon in the vacuole. PatN catalyzes then the transformation of isoepoxydon into phyllostine. The cluster protein patF is responsible for the conversion from phyllostine to neopatulin whereas the alcohol dehydrogenase patD converts neopatulin to E-ascladiol. The steps between isoepoxydon and E-ascladiol occur in the cytosol, and E-ascladiol is probably secreted to the extracellular space by one of the cluster-specific transporters patC or patM. Finally, the secreted patulin synthase patE catalyzes the conversion of E-ascladiol to patulin. The protein is Patulin synthase of Aspergillus clavatus (strain ATCC 1007 / CBS 513.65 / DSM 816 / NCTC 3887 / NRRL 1 / QM 1276 / 107).